A 1158-amino-acid polypeptide reads, in one-letter code: Adipocyte enhancer-binding protein 1 (1158 aa).

A signal peptide spans 1 to 25 (MAAVRGAPLLSCLLALLALCPGGRP). The disordered stretch occupies residues 41–387 (FLSELEPEPR…TPTEKVKCPP (347 aa)). The segment covering 45–55 (LEPEPREDDVE) has biased composition (acidic residues). Residues 100-110 (DKGPKVPKESL) are compositionally biased toward basic and acidic residues. Residues 116 to 166 (PPKKGKEKPPKATKKPKEKPPKATKKPKEKPPKATKKPKEKPPKATKKPPS) show a composition bias toward basic residues. The segment covering 182 to 192 (PLPPPPSPGPE) has biased composition (pro residues). Residues 193–202 (ELPQEGGAPL) are compositionally biased toward low complexity. The segment covering 211–223 (EETHVEAREHQPE) has biased composition (basic and acidic residues). Residues 252 to 266 (RQKQPRPPPSRRRRP) are compositionally biased toward basic residues. Over residues 267–289 (ERVWPEPPEEKAPAPAPEERIEP) the composition is skewed to basic and acidic residues. Positions 290-300 (PVKPLLPPLPP) are enriched in pro residues. Residues 326–371 (PDAERQTDEEKEELKKPKKEDSSPKEETDKWAVEKGKDHKEPRKGE) show a composition bias toward basic and acidic residues. The region spanning 383-540 (VKCPPIGMES…LCMRLEVLGC (158 aa)) is the F5/8 type C domain. The required for DNA-binding and interaction with NFKBIA stretch occupies residues 390–555 (MESHRIEDNQ…YSYYAQNEVV (166 aa)). The interval 421–624 (TGATEDDYYD…EPEFRYTAGI (204 aa)) is interaction with MAPK1 and MAPK3. Asn528 carries N-linked (GlcNAc...) asparagine glycosylation. The interaction with PTEN stretch occupies residues 555-985 (VATDDLDFRH…TQCNFILARS (431 aa)). A Peptidase M14 domain is found at 563–904 (RHHSYKDMRQ…EALLTFMEQV (342 aa)). The N-linked (GlcNAc...) asparagine glycan is linked to Asn922. A required for transcriptional repression region spans residues 941-1158 (DYWRILNPGE…ETYTVNFGDF (218 aa)). The interval 1006–1158 (DPSRPMTPQQ…ETYTVNFGDF (153 aa)) is interaction with MAPK1 and MAPK3. Positions 1108–1137 (EFETQLEPEFETQLEPEFEEEEEEEKEEEI) are enriched in acidic residues. The segment at 1108–1141 (EFETQLEPEFETQLEPEFEEEEEEEKEEEIATGQ) is disordered.

Belongs to the peptidase M14 family. Isoform 1: Interacts with different types of collagen, including collagens I, III, and V. Isoform 2: Interacts with GNG5, NFKBIA, MAPK1, MAPK3 and PTEN. Interaction with MAPK1 may stimulate DNA-binding. May interact with calmodulin. Binds to DNA in vitro. Post-translationally, phosphorylated by MAPK1 in vitro. Expressed in osteoblast and visceral fat.

It localises to the secreted. The protein resides in the cytoplasm. Its subcellular location is the nucleus. In terms of biological role, as a positive regulator of collagen fibrillogenesis, it is probably involved in the organization and remodeling of the extracellular matrix. Its function is as follows. May positively regulate MAP-kinase activity in adipocytes, leading to enhanced adipocyte proliferation and reduced adipocyte differentiation. May also positively regulate NF-kappa-B activity in macrophages by promoting the phosphorylation and subsequent degradation of I-kappa-B-alpha (NFKBIA), leading to enhanced macrophage inflammatory responsiveness. Can act as a transcriptional repressor. This Homo sapiens (Human) protein is Adipocyte enhancer-binding protein 1 (AEBP1).